We begin with the raw amino-acid sequence, 432 residues long: Adenylosuccinate synthetase (432 aa).

Residues 13 to 19 and 41 to 43 each bind GTP; these read GDEGKGK and GHT. The active-site Proton acceptor is the Asp14. Residues Asp14 and Gly41 each coordinate Mg(2+). Residues 14–17, 39–42, Thr131, Arg145, Gln226, Thr241, and Arg305 each bind IMP; these read DEGK and NAGH. The Proton donor role is filled by His42. Position 301–307 (301–307) interacts with substrate; the sequence is SVTGRAR. GTP contacts are provided by residues Arg307, 333–335, and 416–418; these read KLD and STG.

This sequence belongs to the adenylosuccinate synthetase family. In terms of assembly, homodimer. It depends on Mg(2+) as a cofactor.

It is found in the cytoplasm. It carries out the reaction IMP + L-aspartate + GTP = N(6)-(1,2-dicarboxyethyl)-AMP + GDP + phosphate + 2 H(+). Its pathway is purine metabolism; AMP biosynthesis via de novo pathway; AMP from IMP: step 1/2. Its function is as follows. Plays an important role in the de novo pathway of purine nucleotide biosynthesis. Catalyzes the first committed step in the biosynthesis of AMP from IMP. The chain is Adenylosuccinate synthetase from Neisseria meningitidis serogroup A / serotype 4A (strain DSM 15465 / Z2491).